A 315-amino-acid polypeptide reads, in one-letter code: tRNA uridine(34) hydroxylase (315 aa).

A Rhodanese domain is found at 122–223 (SDPDVLVIDT…YLEQIPQPES (102 aa)). C183 acts as the Cysteine persulfide intermediate in catalysis.

Belongs to the TrhO family.

The enzyme catalyses uridine(34) in tRNA + AH2 + O2 = 5-hydroxyuridine(34) in tRNA + A + H2O. In terms of biological role, catalyzes oxygen-dependent 5-hydroxyuridine (ho5U) modification at position 34 in tRNAs. The chain is tRNA uridine(34) hydroxylase from Caulobacter vibrioides (strain ATCC 19089 / CIP 103742 / CB 15) (Caulobacter crescentus).